Here is a 1218-residue protein sequence, read N- to C-terminus: Probable cation-transporting ATPase 13A5 (1218 aa).

4 consecutive transmembrane segments (helical) span residues 33-53 (KAFC…VFYW), 222-242 (GYIE…VLSV), 401-421 (FIVF…GVYM), and 433-453 (MALI…LTIG). Asp-486 serves as the catalytic 4-aspartylphosphate intermediate. N-linked (GlcNAc...) asparagine glycans are attached at residues Asn-540, Asn-669, and Asn-819. Mg(2+) is bound by residues Asp-850 and Asp-854. The next 6 helical transmembrane spans lie at 903-923 (FGVF…ALLL), 940-956 (VAIT…THAY), 973-993 (LLLS…SAFL), 1042-1062 (FETT…AFIF), 1077-1097 (IFSF…FSDF), and 1115-1135 (VLIL…EDSI).

It belongs to the cation transport ATPase (P-type) (TC 3.A.3) family. Type V subfamily.

The protein resides in the membrane. The catalysed reaction is ATP + H2O = ADP + phosphate + H(+). The chain is Probable cation-transporting ATPase 13A5 (ATP13A5) from Homo sapiens (Human).